The chain runs to 145 residues: uncharacterized protein (145 aa).

Residues 1 to 25 (MSENNENDGFNLDPDVKEELEETKS) are disordered. Residues 14-25 (PDVKEELEETKS) show a composition bias toward basic and acidic residues.

This is an uncharacterized protein from His1 virus (isolate Australia/Victoria) (His1V).